We begin with the raw amino-acid sequence, 153 residues long: ATP synthase subunit b' (153 aa).

The chain crosses the membrane as a helical span at residues 23 to 40 (LMAIQVVALTYILNSLFF).

It belongs to the ATPase B chain family. F-type ATPases have 2 components, F(1) - the catalytic core - and F(0) - the membrane proton channel. F(1) has five subunits: alpha(3), beta(3), gamma(1), delta(1), epsilon(1). F(0) has four main subunits: a(1), b(1), b'(1) and c(10-14). The alpha and beta chains form an alternating ring which encloses part of the gamma chain. F(1) is attached to F(0) by a central stalk formed by the gamma and epsilon chains, while a peripheral stalk is formed by the delta, b and b' chains.

The protein resides in the cellular thylakoid membrane. In terms of biological role, f(1)F(0) ATP synthase produces ATP from ADP in the presence of a proton or sodium gradient. F-type ATPases consist of two structural domains, F(1) containing the extramembraneous catalytic core and F(0) containing the membrane proton channel, linked together by a central stalk and a peripheral stalk. During catalysis, ATP synthesis in the catalytic domain of F(1) is coupled via a rotary mechanism of the central stalk subunits to proton translocation. Functionally, component of the F(0) channel, it forms part of the peripheral stalk, linking F(1) to F(0). The b'-subunit is a diverged and duplicated form of b found in plants and photosynthetic bacteria. The chain is ATP synthase subunit b' from Prochlorococcus marinus (strain MIT 9301).